A 200-amino-acid chain; its full sequence is Dephospho-CoA kinase (200 aa).

One can recognise a DPCK domain in the interval 3-200; sequence VLGLTGSIGM…LSGKPAAATR (198 aa). Position 11–16 (11–16) interacts with ATP; it reads GMGKTT.

This sequence belongs to the CoaE family.

The protein localises to the cytoplasm. It catalyses the reaction 3'-dephospho-CoA + ATP = ADP + CoA + H(+). It participates in cofactor biosynthesis; coenzyme A biosynthesis; CoA from (R)-pantothenate: step 5/5. Its function is as follows. Catalyzes the phosphorylation of the 3'-hydroxyl group of dephosphocoenzyme A to form coenzyme A. The protein is Dephospho-CoA kinase of Brucella abortus (strain 2308).